Consider the following 369-residue polypeptide: GDSL esterase/lipase At5g42170 (369 aa).

A signal peptide spans 1–16 (MSRLVYVIFLLVVVEG). N-linked (GlcNAc...) asparagine glycosylation is found at Asn28 and Asn45. Residue Ser57 is the Nucleophile of the active site. N-linked (GlcNAc...) asparagine glycans are attached at residues Asn203 and Asn336. Active-site residues include Asp344 and His347.

It belongs to the 'GDSL' lipolytic enzyme family.

The protein resides in the secreted. The chain is GDSL esterase/lipase At5g42170 from Arabidopsis thaliana (Mouse-ear cress).